We begin with the raw amino-acid sequence, 610 residues long: Elongation factor 4 (610 aa).

A tr-type G domain is found at 14 to 198 (ANIRNFSIVA…AIVTRLPPPQ (185 aa)). Residues 26 to 31 (DHGKST) and 145 to 148 (NKVD) each bind GTP.

Belongs to the TRAFAC class translation factor GTPase superfamily. Classic translation factor GTPase family. LepA subfamily.

The protein resides in the cell inner membrane. The catalysed reaction is GTP + H2O = GDP + phosphate + H(+). In terms of biological role, required for accurate and efficient protein synthesis under certain stress conditions. May act as a fidelity factor of the translation reaction, by catalyzing a one-codon backward translocation of tRNAs on improperly translocated ribosomes. Back-translocation proceeds from a post-translocation (POST) complex to a pre-translocation (PRE) complex, thus giving elongation factor G a second chance to translocate the tRNAs correctly. Binds to ribosomes in a GTP-dependent manner. The polypeptide is Elongation factor 4 (Nitrobacter hamburgensis (strain DSM 10229 / NCIMB 13809 / X14)).